We begin with the raw amino-acid sequence, 284 residues long: Deoxyribonuclease-1 (284 aa).

The N-terminal stretch at 1–22 (MRAARLMGALLALAGLLQLALS) is a signal peptide. N40 is a glycosylation site (N-linked (GlcNAc...) asparagine). E100 is an active-site residue. A disulfide bridge links C123 with C126. N128 is a glycosylation site (N-linked (GlcNAc...) asparagine). H156 is an active-site residue. Residues C195 and C231 are joined by a disulfide bond.

The protein belongs to the DNase I family. Ca(2+) serves as cofactor. Mg(2+) is required as a cofactor.

The protein resides in the secreted. Its subcellular location is the zymogen granule. The protein localises to the nucleus envelope. It carries out the reaction Endonucleolytic cleavage to 5'-phosphodinucleotide and 5'-phosphooligonucleotide end-products.. Functionally, serum endocuclease secreted into body fluids by a wide variety of exocrine and endocrine organs. Expressed by non-hematopoietic tissues and preferentially cleaves protein-free DNA. Among other functions, seems to be involved in cell death by apoptosis. Binds specifically to G-actin and blocks actin polymerization. Together with DNASE1L3, plays a key role in degrading neutrophil extracellular traps (NETs). NETs are mainly composed of DNA fibers and are released by neutrophils to bind pathogens during inflammation. Degradation of intravascular NETs by DNASE1 and DNASE1L3 is required to prevent formation of clots that obstruct blood vessels and cause organ damage following inflammation. The polypeptide is Deoxyribonuclease-1 (DNASE1) (Sus scrofa (Pig)).